The chain runs to 218 residues: Protein-L-isoaspartate O-methyltransferase (218 aa).

The active site involves S52.

Belongs to the methyltransferase superfamily. L-isoaspartyl/D-aspartyl protein methyltransferase family.

Its subcellular location is the cytoplasm. It carries out the reaction [protein]-L-isoaspartate + S-adenosyl-L-methionine = [protein]-L-isoaspartate alpha-methyl ester + S-adenosyl-L-homocysteine. Functionally, catalyzes the methyl esterification of L-isoaspartyl residues in peptides and proteins that result from spontaneous decomposition of normal L-aspartyl and L-asparaginyl residues. It plays a role in the repair and/or degradation of damaged proteins. The sequence is that of Protein-L-isoaspartate O-methyltransferase from Rhodopseudomonas palustris (strain ATCC BAA-98 / CGA009).